A 192-amino-acid chain; its full sequence is Large ribosomal subunit protein uL3 (192 aa).

It belongs to the universal ribosomal protein uL3 family. In terms of assembly, part of the 50S ribosomal subunit. Forms a cluster with proteins L14 and L19.

Its function is as follows. One of the primary rRNA binding proteins, it binds directly near the 3'-end of the 23S rRNA, where it nucleates assembly of the 50S subunit. The chain is Large ribosomal subunit protein uL3 (rplC) from Wolinella succinogenes (strain ATCC 29543 / DSM 1740 / CCUG 13145 / JCM 31913 / LMG 7466 / NCTC 11488 / FDC 602W) (Vibrio succinogenes).